The following is an 817-amino-acid chain: Dual specificity tyrosine-phosphorylation-regulated kinase mbk-2 (817 aa).

4 disordered regions span residues 1–46 (MAAL…HECP), 70–148 (PTSF…GPLG), 186–206 (GSYEFPSGQAQQQRRLGGSQQ), and 301–396 (LPNV…FRPE). The span at 7–25 (FTRNSRSYGQQPIDVTQQG) shows a compositional bias: polar residues. Low complexity-rich tracts occupy residues 70–81 (PTSFSGASSSSS) and 97–111 (NLLGSSQNSASSNSL). 2 stretches are compositionally biased toward polar residues: residues 122–143 (SGNTLTRSYHQPSSTNSSTNNL) and 193–206 (GQAQQQRRLGGSQQ). A compositionally biased stretch (low complexity) spans 303–318 (NVGTSSSNGSSNSSSG). Polar residues predominate over residues 327–351 (LMTQSIGGPNKHLSASHSTLNTAST). At Ser-362 the chain carries Phosphoserine; by cdk-1. Low complexity predominate over residues 364-392 (SNESLSRSHTSSSGGSQGGHNSNSGSNSG). The Protein kinase domain maps to 461-774 (YEVLKVIGKG…PAQALKHKWL (314 aa)). Residues 467–475 (IGKGSFGQV) and Lys-490 each bind ATP. Asp-587 functions as the Proton acceptor in the catalytic mechanism. Residue Tyr-621 is modified to Phosphotyrosine; by autocatalysis.

The protein belongs to the protein kinase superfamily. CMGC Ser/Thr protein kinase family. MNB/DYRK subfamily. In terms of assembly, part of a complex, consisting of pseudophosphatases egg-3, egg-4, egg-5 and kinase mbk-2; this complex is required for the oocyte-to-zygote transition. Interacts (via Tyr-619 and Tyr-621) with egg-4 (via tyrosine-protein phosphatase domain) and egg-5 (via tyrosine-protein phosphatase domain); mbk-2 tyrosine phosphorylation enhances the interaction. The interaction inhibits mbk-2 kinase activity and is required for mbk-2 oocyte cortex localization. Interacts (via N-terminus) with egg-3 (via tyrosine-protein phosphatase domain); the interaction does not affect mbk-2 kinase activity, is enhanced by mbk-2 tyrosine phosphorylation status and requires prior binding of mbk-2 to egg-4 and egg-5. It depends on Mg(2+) as a cofactor. Autophosphorylated. In L1 larvae, expressed widely in the nervous system, including head neurons and the ventral nerve cord. In adult animals, continues to be expressed in the nervous system and is also expressed in body wall muscle.

The protein localises to the cytoplasm. It is found in the cell cortex. It carries out the reaction L-seryl-[protein] + ATP = O-phospho-L-seryl-[protein] + ADP + H(+). The catalysed reaction is L-threonyl-[protein] + ATP = O-phospho-L-threonyl-[protein] + ADP + H(+). It catalyses the reaction L-tyrosyl-[protein] + ATP = O-phospho-L-tyrosyl-[protein] + ADP + H(+). With respect to regulation, activated during oocyte maturation by phosphorylation on Ser-362 by cdk-1. The pseudotyrosine phosphatases egg-4 and egg-5 sequester activated mbk-2 until the meiotic divisions and inhibit mbk-2 kinase activity directly, using a mixed-inhibition mechanism that does not involve tyrosine dephosphorylation. Its function is as follows. Required for oocyte-to-zygote transition in which it phosphorylates oocyte proteins, including mei-1, oma-1, oma-2, mex-5, and mex-6, modifying their activity and/or stability following meiosis. Through phosphorylation of P granule components including meg-1, promotes the disassembly of zygotic P granules in the anterior cytoplasm during zygote polarization, and thus plays a role in P granule distribution and segregation in early stage embryos following meiosis. Functions in both spindle positioning and in the posterior localization of cytoplasmic determinants, including pie-1, pos-1, and pgl-1, in early embryos. Involved in the asymmetric distribution of plk-1 at the 2-cell embryonic stage. This Caenorhabditis elegans protein is Dual specificity tyrosine-phosphorylation-regulated kinase mbk-2.